We begin with the raw amino-acid sequence, 272 residues long: Putative protein-disulfide oxidoreductase RP025 (272 aa).

The signal sequence occupies residues 1-21 (MRNIFIVLIFLFLSNCSEVKA). Residues 74–263 (DSREQKKPEI…ISKAVDKALD (190 aa)) form the Thioredoxin domain. Residues C116 and C119 are joined by a disulfide bond.

It belongs to the thioredoxin family. DsbA subfamily.

The protein resides in the periplasm. Its function is as follows. May be required for disulfide bond formation in some proteins. This chain is Putative protein-disulfide oxidoreductase RP025, found in Rickettsia prowazekii (strain Madrid E).